Reading from the N-terminus, the 1893-residue chain is CDK5 regulatory subunit-associated protein 2 (1893 aa).

The interval 51 to 94 (TVSPTRARNMKDFENQITELKKENFNLKLRIYFLEERMQQEFHG) is CM1 motif; interacts with the gTuRC. Positions 58–196 (RNMKDFENQI…TEKALRLRLE (139 aa)) are interaction with NCKAP5L. A Phosphoserine modification is found at Ser547. The interaction with MAPRE1 stretch occupies residues 926 to 1208 (PGITNREAKK…LENLKQQLEE (283 aa)). Thr1001 carries the phosphothreonine modification. Disordered stretches follow at residues 1015 to 1071 (AAYQ…NPED) and 1084 to 1105 (SKSQ…SINT). Positions 1034-1048 (WRDKEMDSDQQRSYE) are enriched in basic and acidic residues. A Phosphoserine modification is found at Ser1238. The disordered stretch occupies residues 1347–1381 (LPESPEPSASHALSDYETSEKSFFSRDQKQDNETE). Positions 1364–1381 (TSEKSFFSRDQKQDNETE) are enriched in basic and acidic residues. The residue at position 1490 (Ser1490) is a Phosphoserine. Composition is skewed to basic and acidic residues over residues 1500-1519 (SVKE…ERHN) and 1651-1661 (PDKHDGDKYPM). 3 disordered regions span residues 1500–1521 (SVKE…HNQQ), 1646–1706 (EVPL…ATST), and 1754–1774 (QTQE…PHPA). Residues Ser1663 and Ser1666 each carry the phosphoserine modification. Composition is skewed to polar residues over residues 1663 to 1706 (SDNS…ATST) and 1754 to 1766 (QTQE…SQEL). Positions 1726–1768 (HVLGLIEDYEALLKQISQGQRLLAEMDIQTQEAPSSTSQELGT) are interaction with CDK5R1. Residues 1726–1893 (HVLGLIEDYE…GTCSPSRPGS (168 aa)) form an interaction with PCNT and AKAP9 region. The required for centrosomal attachment, Golgi localization and CALM1 interaction stretch occupies residues 1861–1870 (VVTHKILRKA). At Ser1893 the chain carries Phosphoserine.

In terms of assembly, homodimer. Interacts with CDK5R1 (p35 form). CDK5RAP1, CDK5RAP2 and CDK5RAP3 show competitive binding to CDK5R1. May form a complex with CDK5R1 and CDK5. Interacts with pericentrin/PCNT; the interaction is leading to centrosomal and Golgi localization of CDK5RAP2 and PCNT. Interacts with AKAP9; the interaction targets CDK5RAP2 and AKAP9 to Golgi apparatus. Interacts with MAPRE1; the interaction is direct and targets CDK5RAP2 and EB1/MAPRE1 to microtubule plus ends. Interacts with TUBG1; the interaction is leading to the centrosomal localization of CDK5RAP2 and TUBG1. Interacts with TUBGCP3. Interacts with CALM1. Interacts with CDC20. Interacts with CEP68; degradation of CEP68 in early mitosis leads to removal of CDK5RAP2 from the centrosome which promotes centriole disengagement and subsequent centriole separation. Interacts with NCKAP5L. Forms a pericentrosomal complex with AKAP9, MAPRE1 and PDE4DIP isoform 13/MMG8/SMYLE; within this complex, MAPRE1 binding to CDK5RAP2 may be mediated by PDE4DIP. Interacts with LGALS3BP; this interaction may connect the pericentrosomal complex to the gamma-tubulin ring complex (gTuRC) to promote microtubule assembly and acetylation. Interacts with CCDC66. Associates (via CM1 motif) with TUBGCP2 of the gTuRC; the interaction plays a role in gTuRC activation. In terms of processing, phosphorylated in vitro by CDK5. As to expression, widely expressed. Expressed in heart, brain, placenta, lung, liver, skeletal muscle, kidney and pancreas.

The protein resides in the cytoplasm. It localises to the cytoskeleton. The protein localises to the microtubule organizing center. It is found in the centrosome. Its subcellular location is the golgi apparatus. Functionally, potential regulator of CDK5 activity via its interaction with CDK5R1. Negative regulator of centriole disengagement (licensing) which maintains centriole engagement and cohesion. Involved in regulation of mitotic spindle orientation. Plays a role in the spindle checkpoint activation by acting as a transcriptional regulator of both BUBR1 and MAD2 promoter. Together with EB1/MAPRE1, may promote microtubule polymerization, bundle formation, growth and dynamics at the plus ends. Regulates centrosomal maturation by recruitment of the gamma-tubulin ring complex (gTuRC) onto centrosomes. In complex with PDE4DIP isoform 13/MMG8/SMYLE, MAPRE1 and AKAP9, contributes to microtubules nucleation and extension from the centrosome to the cell periphery. Required for the recruitment of AKAP9 to centrosomes. Plays a role in neurogenesis. The sequence is that of CDK5 regulatory subunit-associated protein 2 (CDK5RAP2) from Homo sapiens (Human).